Reading from the N-terminus, the 391-residue chain is Cilia- and flagella-associated protein 263 (391 aa).

Residues M1 to L21 form a disordered region. Coiled coils occupy residues L95–L243 and L294–Y369.

This sequence belongs to the CFAP263 family. In terms of assembly, forms a complex with CFAP184; the interaction is required for functional activity in cilia. Interacts with HAP1 and PCM1.

It is found in the cytoplasm. The protein resides in the cytoskeleton. The protein localises to the microtubule organizing center. Its subcellular location is the centrosome. It localises to the centriolar satellite. It is found in the cell projection. The protein resides in the cilium. In terms of biological role, component of centriolar satellites contributing to primary cilium formation. In complex with CFAP263, acts as a regulator of ciliary beating that connects radial spoke 3 (RS3) to the inner dynein arm (IDA) and the nexin-dynein regulatory complex (N-DRC). The complex is positioned parallel to N-DRC and forms a connection between the arch at the base of RS3, the IDA tail and N-DRC. The polypeptide is Cilia- and flagella-associated protein 263 (CFAP263) (Bos taurus (Bovine)).